The chain runs to 81 residues: Beta-defensin 34 (81 aa).

The N-terminal stretch at 1-20 is a signal peptide; sequence MKTFLFLFAVLFFWSQPRMH. 3 cysteine pairs are disulfide-bonded: Cys28–Cys55, Cys35–Cys49, and Cys39–Cys56. Polar residues predominate over residues 62–72; it reads CGRSKGNQSDE. Residues 62–81 form a disordered region; the sequence is CGRSKGNQSDEGSGHMGTRG.

This sequence belongs to the beta-defensin family. Only expressed in epididymis (caput, corpus and cauda).

It localises to the secreted. Its function is as follows. Has antibacterial activity. In Mus musculus (Mouse), this protein is Beta-defensin 34 (Defb34).